Here is a 231-residue protein sequence, read N- to C-terminus: Quercetin 2,3-dioxygenase (231 aa).

A divalent metal cation-binding residues include H57, H59, H101, and E103.

It belongs to the pirin family. Zn(2+) is required as a cofactor. Requires Co(2+) as cofactor. The cofactor is Fe(2+).

The enzyme catalyses quercetin + O2 = 2-(3,4-dihydroxybenzoyloxy)-4,6-dihydroxybenzoate + CO. It functions in the pathway flavonoid metabolism; quercetin degradation. In terms of biological role, has quercetin 2,3-dioxygenase activity in vitro. Its physiological role is unknown; however, may provide a mechanism that would avoid inhibition of key cellular proteins, such as DNA gyrase, by quercetin. The protein is Quercetin 2,3-dioxygenase (yhhW) of Escherichia coli O157:H7.